Reading from the N-terminus, the 80-residue chain is Small ribosomal subunit protein uS17 (80 aa).

Belongs to the universal ribosomal protein uS17 family. Part of the 30S ribosomal subunit.

In terms of biological role, one of the primary rRNA binding proteins, it binds specifically to the 5'-end of 16S ribosomal RNA. The chain is Small ribosomal subunit protein uS17 from Chelativorans sp. (strain BNC1).